The following is a 291-amino-acid chain: Small ribosomal subunit biogenesis GTPase RsgA (291 aa).

Residues 63-221 (ENELKRPPVS…IADTPGFSAL (159 aa)) form the CP-type G domain. GTP is bound by residues 112 to 115 (TKKD) and 164 to 172 (GQSGVGKST). Zn(2+) contacts are provided by cysteine 245, cysteine 250, histidine 252, and cysteine 258.

It belongs to the TRAFAC class YlqF/YawG GTPase family. RsgA subfamily. As to quaternary structure, monomer. Associates with 30S ribosomal subunit, binds 16S rRNA. Zn(2+) is required as a cofactor.

The protein resides in the cytoplasm. One of several proteins that assist in the late maturation steps of the functional core of the 30S ribosomal subunit. Helps release RbfA from mature subunits. May play a role in the assembly of ribosomal proteins into the subunit. Circularly permuted GTPase that catalyzes slow GTP hydrolysis, GTPase activity is stimulated by the 30S ribosomal subunit. The protein is Small ribosomal subunit biogenesis GTPase RsgA of Staphylococcus aureus (strain COL).